Here is a 425-residue protein sequence, read N- to C-terminus: Sucrose-phosphatase 1 (425 aa).

This sequence belongs to the sucrose phosphatase family. In terms of assembly, homodimer. Requires Mg(2+) as cofactor.

It carries out the reaction sucrose 6(F)-phosphate + H2O = sucrose + phosphate. The protein operates within glycan biosynthesis; sucrose biosynthesis; sucrose from D-fructose 6-phosphate and UDP-alpha-D-glucose: step 2/2. With respect to regulation, inhibited by EDTA. Catalyzes the final step of sucrose synthesis. The polypeptide is Sucrose-phosphatase 1 (SPP1) (Nicotiana tabacum (Common tobacco)).